A 359-amino-acid polypeptide reads, in one-letter code: Cell division protein ZipA (359 aa).

The Periplasmic portion of the chain corresponds to 1 to 4; sequence MDLN. The chain crosses the membrane as a helical span at residues 5–25; it reads TILIILGILALVALVAHGLWS. Residues 26–359 lie on the Cytoplasmic side of the membrane; that stretch reads NRREKSQYFE…AEEEYLAKIK (334 aa). Residues 78–101 are disordered; that stretch reads PPVQQPLNTEPEPITQETPVRAEP.

It belongs to the ZipA family. In terms of assembly, interacts with FtsZ via their C-terminal domains.

It is found in the cell inner membrane. Functionally, essential cell division protein that stabilizes the FtsZ protofilaments by cross-linking them and that serves as a cytoplasmic membrane anchor for the Z ring. Also required for the recruitment to the septal ring of downstream cell division proteins. This Mannheimia succiniciproducens (strain KCTC 0769BP / MBEL55E) protein is Cell division protein ZipA.